Reading from the N-terminus, the 390-residue chain is MRRCFSKITDCHLGFKNSNFLLVGSEVGSGSVTRTITTTTSERLFSSSYAAHQVDQIKDNPVSDMLIDKFGRLHTYLRISLTERCNLRCQYCMPSEGVELTPKPQLLSQSEIVRLAGLFVSAGVNKIRLTGGEPTVRKDIEEICLQLSSLKGLKNLAITTNGITLAKKLPRLKECGLDSLNISLDTLVPAKFEFLTRRKGHDRVMKSIDTAIELGYNPVKVNCVIMRGLNDDEICDFVELTRDKPINVRFIEFMPFDGNVWNVKKLVPYAEVMDKVVKRFPSIKRMQDHPTETAKNFTIDGHCGSVSFITSMTEHFCAGCNRLRLLADGNFKVCLFGPSEVSLRDPLRSGADDEALREIIGAAVKRKKAAHAGMLDIAKTANRPMIHIGG.

A mitochondrion-targeting transit peptide spans 1–45 (MRRCFSKITDCHLGFKNSNFLLVGSEVGSGSVTRTITTTTSERLF). The Radical SAM core domain occupies 69–290 (KFGRLHTYLR…PSIKRMQDHP (222 aa)). Arginine 78 provides a ligand contact to GTP. Positions 85 and 89 each coordinate [4Fe-4S] cluster. An S-adenosyl-L-methionine-binding site is contributed by tyrosine 91. Cysteine 92 serves as a coordination point for [4Fe-4S] cluster. Arginine 128 lines the GTP pocket. Residue glycine 132 coordinates S-adenosyl-L-methionine. Residue threonine 159 participates in GTP binding. Position 183 (serine 183) interacts with S-adenosyl-L-methionine. GTP is bound at residue lysine 220. S-adenosyl-L-methionine is bound at residue methionine 254. Residues cysteine 317 and cysteine 320 each contribute to the [4Fe-4S] cluster site. Residue 322–324 (RLR) coordinates GTP. Cysteine 334 is a [4Fe-4S] cluster binding site.

This sequence belongs to the radical SAM superfamily. MoaA family. As to quaternary structure, homodimer. Requires [4Fe-4S] cluster as cofactor. Expressed in all organs, with an abundant expression in the roots.

It localises to the mitochondrion matrix. It carries out the reaction GTP + AH2 + S-adenosyl-L-methionine = (8S)-3',8-cyclo-7,8-dihydroguanosine 5'-triphosphate + 5'-deoxyadenosine + L-methionine + A + H(+). The protein operates within cofactor biosynthesis; molybdopterin biosynthesis. Its function is as follows. Catalyzes the cyclization of GTP to (8S)-3',8-cyclo-7,8-dihydroguanosine 5'-triphosphate. This chain is GTP 3',8-cyclase, mitochondrial (CNX2), found in Arabidopsis thaliana (Mouse-ear cress).